Reading from the N-terminus, the 204-residue chain is Somatotropin (204 aa).

Residues Met1–Ser17 form the signal peptide. At Gln18 the chain carries Pyrrolidone carboxylic acid. His36 provides a ligand contact to Zn(2+). Cys69 and Cys177 are oxidised to a cystine. Glu186 is a Zn(2+) binding site. A disulfide bridge links Cys194 with Cys202.

The protein belongs to the somatotropin/prolactin family.

The protein localises to the secreted. In terms of biological role, growth hormone plays an important role in growth control and is involved in the regulation of several anabolic processes. Implicated as an osmoregulatory substance important for seawater adaptation. This chain is Somatotropin (gh), found in Lates calcarifer (Barramundi).